The chain runs to 142 residues: MTRRIRDYKFEELLERAYSKLPARTVSKETFEVPRAEVMFVGGKTLILNFKQITDVINRDPKILQRYFVKELGVPAYMNESGQLILQGRFSSHVINRLIDLFVKKYVICPTCGSRFTKLIKKGKVFILKCEACGAETTLEAF.

This sequence belongs to the eIF-2-beta/eIF-5 family. In terms of assembly, heterotrimer composed of an alpha, a beta and a gamma chain.

EIF-2 functions in the early steps of protein synthesis by forming a ternary complex with GTP and initiator tRNA. The protein is Translation initiation factor 2 subunit beta of Staphylothermus marinus (strain ATCC 43588 / DSM 3639 / JCM 9404 / F1).